Consider the following 737-residue polypeptide: Catalase-peroxidase (737 aa).

The signal sequence occupies residues M1–A23. Positions W102 to Y223 form a cross-link, tryptophyl-tyrosyl-methioninium (Trp-Tyr) (with M-249). The Proton acceptor role is filled by H103. The tryptophyl-tyrosyl-methioninium (Tyr-Met) (with W-102) cross-link spans Y223 to M249. H264 contacts heme b.

This sequence belongs to the peroxidase family. Peroxidase/catalase subfamily. As to quaternary structure, homodimer or homotetramer. It depends on heme b as a cofactor. Post-translationally, formation of the three residue Trp-Tyr-Met cross-link is important for the catalase, but not the peroxidase activity of the enzyme.

The enzyme catalyses H2O2 + AH2 = A + 2 H2O. It catalyses the reaction 2 H2O2 = O2 + 2 H2O. Its function is as follows. Bifunctional enzyme with both catalase and broad-spectrum peroxidase activity. The polypeptide is Catalase-peroxidase (Yersinia pseudotuberculosis serotype O:3 (strain YPIII)).